The primary structure comprises 464 residues: Putative guanine nucleotide-binding protein subunit alpha (464 aa).

The G-alpha domain maps to 33 to 415 (HSKLKRGDGP…ETKRDKYNEK (383 aa)). Positions 36-49 (LKRGDGPGESGKST) are G1 motif. GTP-binding positions include 41–48 (GPGESGKS), 147–151 (DVGGQ), 214–220 (LRSRTKT), 239–243 (DVGGQ), 268–271 (RNRD), and 310–313 (TSQS). Ser48 is a Mg(2+) binding site. The segment at 212-220 (DVLRSRTKT) is G2 motif. Thr220 provides a ligand contact to Mg(2+). The segment at 235–244 (FRMVDVGGQR) is G3 motif. The interval 306–313 (VMFLTSQS) is G4 motif. A G5 motif region spans residues 382–387 (GYSGTC).

In the N-terminal section; belongs to the G-alpha family. It in the C-terminal section; belongs to the class-II aminoacyl-tRNA synthetase family. G proteins are composed of 3 units; alpha, beta and gamma. The alpha chain contains the guanine nucleotide binding site.

Guanine nucleotide-binding proteins (G proteins) are involved as modulators or transducers in various transmembrane signaling systems. This is Putative guanine nucleotide-binding protein subunit alpha from Leishmania donovani.